The following is a 309-amino-acid chain: Porphobilinogen deaminase (309 aa).

Residue C244 is modified to S-(dipyrrolylmethanemethyl)cysteine.

Belongs to the HMBS family. In terms of assembly, monomer. Requires dipyrromethane as cofactor.

The enzyme catalyses 4 porphobilinogen + H2O = hydroxymethylbilane + 4 NH4(+). Its pathway is porphyrin-containing compound metabolism; protoporphyrin-IX biosynthesis; coproporphyrinogen-III from 5-aminolevulinate: step 2/4. Tetrapolymerization of the monopyrrole PBG into the hydroxymethylbilane pre-uroporphyrinogen in several discrete steps. The protein is Porphobilinogen deaminase of Listeria welshimeri serovar 6b (strain ATCC 35897 / DSM 20650 / CCUG 15529 / CIP 8149 / NCTC 11857 / SLCC 5334 / V8).